Consider the following 400-residue polypeptide: Bifunctional enzyme IspD/IspF (400 aa).

The segment at 1–240 is 2-C-methyl-D-erythritol 4-phosphate cytidylyltransferase; the sequence is MQESTMKFGI…EKLSHALPDV (240 aa). Positions 241–400 are 2-C-methyl-D-erythritol 2,4-cyclodiphosphate synthase; the sequence is RTGNGYDVHQ…ATVVYQGRPL (160 aa). Asp247 and His249 together coordinate a divalent metal cation. Residues 247–249 and 273–274 contribute to the 4-CDP-2-C-methyl-D-erythritol 2-phosphate site; these read DVH and HS. His281 is an a divalent metal cation binding site. Residues 295–297, 371–374, Phe378, and Arg381 contribute to the 4-CDP-2-C-methyl-D-erythritol 2-phosphate site; these read DIG and TTNE.

It in the N-terminal section; belongs to the IspD/TarI cytidylyltransferase family. IspD subfamily. The protein in the C-terminal section; belongs to the IspF family. A divalent metal cation serves as cofactor.

It catalyses the reaction 2-C-methyl-D-erythritol 4-phosphate + CTP + H(+) = 4-CDP-2-C-methyl-D-erythritol + diphosphate. The enzyme catalyses 4-CDP-2-C-methyl-D-erythritol 2-phosphate = 2-C-methyl-D-erythritol 2,4-cyclic diphosphate + CMP. Its pathway is isoprenoid biosynthesis; isopentenyl diphosphate biosynthesis via DXP pathway; isopentenyl diphosphate from 1-deoxy-D-xylulose 5-phosphate: step 2/6. It functions in the pathway isoprenoid biosynthesis; isopentenyl diphosphate biosynthesis via DXP pathway; isopentenyl diphosphate from 1-deoxy-D-xylulose 5-phosphate: step 4/6. Its function is as follows. Bifunctional enzyme that catalyzes the formation of 4-diphosphocytidyl-2-C-methyl-D-erythritol from CTP and 2-C-methyl-D-erythritol 4-phosphate (MEP) (IspD), and catalyzes the conversion of 4-diphosphocytidyl-2-C-methyl-D-erythritol 2-phosphate (CDP-ME2P) to 2-C-methyl-D-erythritol 2,4-cyclodiphosphate (ME-CPP) with a corresponding release of cytidine 5-monophosphate (CMP) (IspF). The sequence is that of Bifunctional enzyme IspD/IspF from Agrobacterium fabrum (strain C58 / ATCC 33970) (Agrobacterium tumefaciens (strain C58)).